The following is a 641-amino-acid chain: DNA mismatch repair protein MutL (641 aa).

The disordered stretch occupies residues 345 to 445 (PAAVAPPAPA…GDTSLGDTSP (101 aa)). Residues 419–429 (PRTEPATRTGE) are compositionally biased toward basic and acidic residues. Residues 432–442 (GISSGDTSLGD) show a composition bias toward polar residues.

This sequence belongs to the DNA mismatch repair MutL/HexB family.

This protein is involved in the repair of mismatches in DNA. It is required for dam-dependent methyl-directed DNA mismatch repair. May act as a 'molecular matchmaker', a protein that promotes the formation of a stable complex between two or more DNA-binding proteins in an ATP-dependent manner without itself being part of a final effector complex. The polypeptide is DNA mismatch repair protein MutL (Azotobacter vinelandii (strain DJ / ATCC BAA-1303)).